Here is a 320-residue protein sequence, read N- to C-terminus: tRNA pseudouridine synthase B (320 aa).

Catalysis depends on D49, which acts as the Nucleophile.

The protein belongs to the pseudouridine synthase TruB family. Type 1 subfamily.

It catalyses the reaction uridine(55) in tRNA = pseudouridine(55) in tRNA. Functionally, responsible for synthesis of pseudouridine from uracil-55 in the psi GC loop of transfer RNAs. The sequence is that of tRNA pseudouridine synthase B from Bartonella tribocorum (strain CIP 105476 / IBS 506).